Consider the following 188-residue polypeptide: Protein crossbronx-like (188 aa).

One can recognise a UBC core domain in the interval 15 to 174; it reads KQGYHILAEY…ANQVVKLHCG (160 aa).

The protein belongs to the ubiquitin-conjugating enzyme family. FTS subfamily.

The chain is Protein crossbronx-like from Drosophila simulans (Fruit fly).